The following is a 344-amino-acid chain: Ion-translocating oxidoreductase complex subunit D (344 aa).

4 helical membrane-spanning segments follow: residues Leu-23–Thr-43, Leu-44–Leu-64, Val-80–Val-100, and Pro-120–Thr-140. Thr-172 is subject to FMN phosphoryl threonine. 5 helical membrane-spanning segments follow: residues Leu-198 to Leu-218, Leu-222 to Phe-242, Gly-252 to Thr-272, Leu-285 to Pro-305, and Asp-306 to Thr-326.

This sequence belongs to the NqrB/RnfD family. The complex is composed of six subunits: RnfA, RnfB, RnfC, RnfD, RnfE and RnfG. It depends on FMN as a cofactor.

The protein resides in the cell inner membrane. Functionally, part of a membrane-bound complex that couples electron transfer with translocation of ions across the membrane. The chain is Ion-translocating oxidoreductase complex subunit D from Pseudomonas paraeruginosa (strain DSM 24068 / PA7) (Pseudomonas aeruginosa (strain PA7)).